A 353-amino-acid chain; its full sequence is UPF0283 membrane protein YPA_1696 (353 aa).

The next 3 membrane-spanning stretches (helical) occupy residues 71–91, 101–121, and 214–234; these read MVTA…VQWV, IALG…GSVV, and ESAL…FIAW.

The protein belongs to the UPF0283 family.

It localises to the cell inner membrane. The sequence is that of UPF0283 membrane protein YPA_1696 from Yersinia pestis bv. Antiqua (strain Antiqua).